Reading from the N-terminus, the 129-residue chain is Biogenesis of lysosome-related organelles complex 1 subunit CNL1 (129 aa).

Belongs to the BLOC1S4 family. Component of the biogenesis of lysosome-related organelles complex-1 (BLOC-1).

Its subcellular location is the cytoplasm. Component of the biogenesis of lysosome-related organelles complex-1 (BLOC-1), a complex that is involved in endosomal cargo sorting. This is Biogenesis of lysosome-related organelles complex 1 subunit CNL1 (CLN1) from Eremothecium gossypii (strain ATCC 10895 / CBS 109.51 / FGSC 9923 / NRRL Y-1056) (Yeast).